A 244-amino-acid chain; its full sequence is Multiple organellar RNA editing factor 3, mitochondrial (244 aa).

The N-terminal 62 residues, 1-62 (MALISTRRTL…GPCYISTRPK (62 aa)), are a transit peptide targeting the mitochondrion. Disordered stretches follow at residues 59–82 (TRPKTSGSGYSPLNDPSPNWSNRP) and 196–244 (YRFT…KPSA). A compositionally biased stretch (polar residues) spans 60-80 (RPKTSGSGYSPLNDPSPNWSN). Basic and acidic residues predominate over residues 210–226 (PRYDRRRETMQVERREP).

This sequence belongs to the MORF family. As to quaternary structure, heterodimer with MORF1. Homodimer and heterodimers with MORF8/RIP1, MORF4/RIP4 and MORF5/RIP5.

The protein resides in the mitochondrion. Involved in organellar RNA editing. Required for the processing of RNA editing sites in mitochondria. The protein is Multiple organellar RNA editing factor 3, mitochondrial of Arabidopsis thaliana (Mouse-ear cress).